A 365-amino-acid chain; its full sequence is Aminomethyltransferase (365 aa).

Belongs to the GcvT family. The glycine cleavage system is composed of four proteins: P, T, L and H.

It catalyses the reaction N(6)-[(R)-S(8)-aminomethyldihydrolipoyl]-L-lysyl-[protein] + (6S)-5,6,7,8-tetrahydrofolate = N(6)-[(R)-dihydrolipoyl]-L-lysyl-[protein] + (6R)-5,10-methylene-5,6,7,8-tetrahydrofolate + NH4(+). In terms of biological role, the glycine cleavage system catalyzes the degradation of glycine. The sequence is that of Aminomethyltransferase from Serratia proteamaculans (strain 568).